A 533-amino-acid polypeptide reads, in one-letter code: Flavin-containing monooxygenase 5 (533 aa).

Arg5 carries the post-translational modification Dimethylated arginine. FAD-binding positions include 10–14 (GAGAS), Glu33, and 41–42 (LW). Ser54 bears the Phosphoserine mark. At Tyr56 the chain carries Phosphotyrosine. Ser58 is subject to Phosphoserine. 62–63 (NT) provides a ligand contact to FAD. 196–199 (SGGD) serves as a coordination point for NADP(+). Residue Ser280 is modified to Phosphoserine. The residue at position 284 (Thr284) is a Phosphothreonine. Ser401 is subject to Phosphoserine. Residues 513–533 (MMTMGKFMLAIAFLAIAVVYF) traverse the membrane as a helical segment.

This sequence belongs to the FMO family. It depends on FAD as a cofactor. In terms of tissue distribution, kidney and liver.

It localises to the microsome membrane. The protein localises to the endoplasmic reticulum membrane. It carries out the reaction N,N-dimethylaniline + NADPH + O2 + H(+) = N,N-dimethylaniline N-oxide + NADP(+) + H2O. It catalyses the reaction NADPH + O2 + H(+) = H2O2 + NADP(+). The enzyme catalyses heptan-2-one + NADPH + O2 + H(+) = pentyl acetate + NADP(+) + H2O. The catalysed reaction is octan-3-one + NADPH + O2 + H(+) = pentyl propanoate + NADP(+) + H2O. It carries out the reaction octan-3-one + NADPH + O2 + H(+) = ethyl hexanoate + NADP(+) + H2O. It catalyses the reaction hexan-3-one + NADPH + O2 + H(+) = ethyl butanoate + NADP(+) + H2O. The enzyme catalyses hexan-3-one + NADPH + O2 + H(+) = propyl propanoate + NADP(+) + H2O. The catalysed reaction is heptan-4-one + NADPH + O2 + H(+) = propyl butanoate + NADP(+) + H2O. It carries out the reaction (2E)-geranial + NADPH + O2 + H(+) = (1E)-2,6-dimethylhepta-1,5-dien-1-yl formate + NADP(+) + H2O. It catalyses the reaction sulcatone + NADPH + O2 + H(+) = 4-methylpent-3-en-1-yl acetate + NADP(+) + H2O. Acts as a Baeyer-Villiger monooxygenase on a broad range of substrates. Catalyzes the insertion of an oxygen atom into a carbon-carbon bond adjacent to a carbonyl, which converts ketones to esters. Active on diverse carbonyl compounds, whereas soft nucleophiles are mostly non- or poorly reactive. In contrast with other forms of FMO it is non- or poorly active on 'classical' substrates such as drugs, pesticides, and dietary components containing soft nucleophilic heteroatoms. Able to oxidize drug molecules bearing a carbonyl group on an aliphatic chain, such as nabumetone and pentoxifylline. Also, in the absence of substrates, shows slow but yet significant NADPH oxidase activity. Acts as a positive modulator of cholesterol biosynthesis as well as glucose homeostasis, promoting metabolic aging via pleiotropic effects. The protein is Flavin-containing monooxygenase 5 (FMO5) of Oryctolagus cuniculus (Rabbit).